The following is a 1128-amino-acid chain: Major DNA-binding protein (1128 aa).

The tract at residues 1104 to 1128 (LGGGGQGSGGRRKRRLATVLPGLEV) is required for nuclear localization.

This sequence belongs to the herpesviridae major DNA-binding protein family. Homooligomers. Forms double-helical filaments necessary for the formation of replication compartments within the host nucleus. Interacts with the origin-binding protein. Interacts with the helicase primase complex; this interaction stimulates primer synthesis activity of the helicase-primase complex. Interacts with the DNA polymerase. Interacts with the alkaline exonuclease; this interaction increases its nuclease processivity.

Its subcellular location is the virion tegument. The protein resides in the host nucleus. Plays several crucial roles in viral infection. Participates in the opening of the viral DNA origin to initiate replication by interacting with the origin-binding protein. May disrupt loops, hairpins and other secondary structures present on ssDNA to reduce and eliminate pausing of viral DNA polymerase at specific sites during elongation. Promotes viral DNA recombination by performing strand-transfer, characterized by the ability to transfer a DNA strand from a linear duplex to a complementary single-stranded DNA circle. Can also catalyze the renaturation of complementary single strands. Additionally, reorganizes the host cell nucleus, leading to the formation of prereplicative sites and replication compartments. This process is driven by the protein which can form double-helical filaments in the absence of DNA. This is Major DNA-binding protein from Homo sapiens (Human).